Reading from the N-terminus, the 105-residue chain is MTLSGKISVKAETIAHVVKELESISQKYDEIAQNFGKIAQLNYYSSEKAAHSMENGYSSAATVISGLKGPLSTLGGGVMNSAQKFFEADEHWGTEFAKLYYNIEG.

Forms heterodimers with EsxB.

It is found in the secreted. This Staphylococcus aureus (strain USA300) protein is Type VII secretion system extracellular protein D.